The following is a 313-amino-acid chain: Cytochrome c biogenesis protein CcsA (313 aa).

The next 8 helical transmembrane spans lie at 9–29 (ILTHISFSIVSIVITIHLITL), 44–64 (GIIVTFFCITGLLVTRWISSG), 71–91 (LYESLIFLSWSFSLIHIIPYF), 101–121 (IIGPSAIFTQGFATSGILTEI), 143–163 (MILGYAALLCGSLLSVALLVI), 217–237 (VISLGFTFLTIGILSGAVWAN), 244–264 (WNWDPKETWAFITWIVFAIYL), and 278–298 (AIVASIGFLIIWICYFGVNLL).

Belongs to the CcmF/CycK/Ccl1/NrfE/CcsA family. As to quaternary structure, may interact with Ccs1.

It is found in the plastid. The protein localises to the chloroplast thylakoid membrane. Required during biogenesis of c-type cytochromes (cytochrome c6 and cytochrome f) at the step of heme attachment. The polypeptide is Cytochrome c biogenesis protein CcsA (Nicotiana tomentosiformis (Tobacco)).